A 262-amino-acid chain; its full sequence is Adenosylcobinamide-GDP ribazoletransferase (262 aa).

7 helical membrane-spanning segments follow: residues 37-57 (SMPL…ALCS), 58-78 (MFSF…GIWL), 112-132 (VGAF…LFLY), 139-159 (IPPA…AWLL), 183-203 (AVWA…FGGV), 205-225 (VWTS…AKPW), and 237-257 (VLGA…WLLH).

Belongs to the CobS family. It depends on Mg(2+) as a cofactor.

Its subcellular location is the cell membrane. The enzyme catalyses alpha-ribazole + adenosylcob(III)inamide-GDP = adenosylcob(III)alamin + GMP + H(+). It carries out the reaction alpha-ribazole 5'-phosphate + adenosylcob(III)inamide-GDP = adenosylcob(III)alamin 5'-phosphate + GMP + H(+). Its pathway is cofactor biosynthesis; adenosylcobalamin biosynthesis; adenosylcobalamin from cob(II)yrinate a,c-diamide: step 7/7. In terms of biological role, joins adenosylcobinamide-GDP and alpha-ribazole to generate adenosylcobalamin (Ado-cobalamin). Also synthesizes adenosylcobalamin 5'-phosphate from adenosylcobinamide-GDP and alpha-ribazole 5'-phosphate. This chain is Adenosylcobinamide-GDP ribazoletransferase, found in Geobacillus thermodenitrificans (strain NG80-2).